The primary structure comprises 92 residues: FMRFamide-like neuropeptides 16 (92 aa).

The N-terminal stretch at 1-24 (MNFSGFEFSSIVAFFLLILQLSTA) is a signal peptide. Positions 25-55 (AVLPADYAYGVADEMSALPDSGSLFAEQRPS) are excised as a propeptide. Residues Phe-64, Phe-74, and Phe-84 each carry the phenylalanine amide modification. Positions 87-92 (SAPFEQ) are excised as a propeptide.

Belongs to the FARP (FMRFamide related peptide) family. As to expression, each flp gene is expressed in a distinct set of neurons.

It is found in the secreted. FMRFamides and FMRFamide-like peptides are neuropeptides. AQTFVRF-amide inhibits the activity of dissected pharyngeal myogenic muscle system. In Caenorhabditis elegans, this protein is FMRFamide-like neuropeptides 16.